Reading from the N-terminus, the 194-residue chain is Outer-membrane lipoprotein LolB (194 aa).

Residues 1 to 18 form the signal peptide; sequence MTLLLRLFTLGCLLLLAG. C19 carries the N-palmitoyl cysteine lipid modification. Residue C19 is the site of S-diacylglycerol cysteine attachment.

The protein belongs to the LolB family. Monomer.

The protein resides in the cell outer membrane. Functionally, plays a critical role in the incorporation of lipoproteins in the outer membrane after they are released by the LolA protein. In Aeromonas hydrophila subsp. hydrophila (strain ATCC 7966 / DSM 30187 / BCRC 13018 / CCUG 14551 / JCM 1027 / KCTC 2358 / NCIMB 9240 / NCTC 8049), this protein is Outer-membrane lipoprotein LolB.